The chain runs to 142 residues: Transcriptional regulator MraZ (142 aa).

SpoVT-AbrB domains lie at 5–51 (ASSL…PRPV) and 77–120 (ASDV…DAAR).

The protein belongs to the MraZ family. As to quaternary structure, forms oligomers.

The protein resides in the cytoplasm. It localises to the nucleoid. This chain is Transcriptional regulator MraZ, found in Herminiimonas arsenicoxydans.